Reading from the N-terminus, the 79-residue chain is RNA-binding protein Hfq (79 aa).

In terms of domain architecture, Sm spans 10-69 (DPFLNALRKEHVPVSIYLVNGIKLQGNIESFDQYVVLLRNTVTQMVYKHAISTVVPARAV).

This sequence belongs to the Hfq family. As to quaternary structure, homohexamer.

Functionally, RNA chaperone that binds small regulatory RNA (sRNAs) and mRNAs to facilitate mRNA translational regulation in response to envelope stress, environmental stress and changes in metabolite concentrations. Also binds with high specificity to tRNAs. This chain is RNA-binding protein Hfq, found in Ralstonia nicotianae (strain ATCC BAA-1114 / GMI1000) (Ralstonia solanacearum).